A 204-amino-acid chain; its full sequence is Protease (204 aa).

Catalysis depends on residues H54, D71, and C122.

It belongs to the peptidase C5 family. Interacts with protease cofactor pVI-C; this interaction is necessary for protease activation.

Its subcellular location is the virion. The protein resides in the host nucleus. The catalysed reaction is Cleaves proteins of the adenovirus and its host cell at two consensus sites: -Yaa-Xaa-Gly-Gly-|-Xaa- and -Yaa-Xaa-Gly-Xaa-|-Gly- (in which Yaa is Met, Ile or Leu, and Xaa is any amino acid).. With respect to regulation, requires DNA and protease cofactor for maximal activation. Inside nascent virions, becomes partially activated by binding to the viral DNA, allowing it to cleave the cofactor that binds to the protease and fully activates it. Actin, like the viral protease cofactor, seems to act as a cofactor in the cleavage of cytokeratin 18 and of actin itself. Functionally, cleaves viral precursor proteins (pTP, pIIIa, pVI, pVII, pVIII, and pX) inside newly assembled particles giving rise to mature virions. Protease complexed to its cofactor slides along the viral DNA to specifically locate and cleave the viral precursors. Mature virions have a weakened organization compared to the unmature virions, thereby facilitating subsequent uncoating. Without maturation, the particle lacks infectivity and is unable to uncoat. Late in adenovirus infection, in the cytoplasm, may participate in the cytoskeleton destruction. Cleaves host cell cytoskeletal keratins K7 and K18. This is Protease from Bos taurus (Bovine).